We begin with the raw amino-acid sequence, 587 residues long: Putative phagocytic receptor 1b (587 aa).

The signal sequence occupies residues 1–23; the sequence is MRLQILLIYLICIIVSSIVLVES. 9 helical membrane passes run 223–243, 294–314, 319–339, 354–374, 390–410, 448–468, 480–500, 524–544, and 556–576; these read LSVM…AIMI, IGWQ…FGMF, GGNM…ISGY, AWNI…VVIL, ILTM…LTVV, ILIA…YIFN, GILC…TVAL, VVFI…MYGL, and IVCF…SLIF.

The protein belongs to the nonaspanin (TM9SF) (TC 9.A.2) family.

The protein resides in the membrane. Its function is as follows. Involved in adhesion and phagocytosis of hydrophilic particles. The protein is Putative phagocytic receptor 1b (phg1b) of Dictyostelium discoideum (Social amoeba).